Consider the following 175-residue polypeptide: Viral interleukin-10 homolog (175 aa).

The first 19 residues, 1 to 19 (MLSVMVSSSLVLIVFFLGA), serve as a signal peptide directing secretion. Cystine bridges form between cysteine 37–cysteine 127 and cysteine 81–cysteine 132. Asparagine 151 carries N-linked (GlcNAc...) asparagine; by host glycosylation.

The protein belongs to the IL-10 family. As to quaternary structure, homodimer; disulfide-linked.

The protein localises to the secreted. Functionally, functional viral IL-10 homolog. Can bind to the human IL-10 receptor and compete with human IL-10 for binding sites. Requires both subunits of the human IL-10 receptor complex to induce signal transduction events and biological activities. IL-10 signaling pathway has several immunosuppressive activities that are exploited by the virus. Inhibits TLR-induced type I interferon production in host plasmacytoid dendritic cells. This chain is Viral interleukin-10 homolog (UL111A), found in Human cytomegalovirus (strain AD169) (HHV-5).